Consider the following 1072-residue polypeptide: MPKRLDINTILVIGSGPIVIGQAAEFDYSGTQACQSLKEEGYKVILVNSNPATIMTDTATADKVYIEPLTLEFVSRIIRKERPDAILPTLGGQTGLNMAVELAKSGVLEECGVEILGTKLSAIEQAEDRDLFRTLMQDLNEPTPPSEIIHNLDEAYSFVNEIGYPVIVRPAFTLGGTGGGICHNEEELIEIVTSGLKHSPVTQCLLEKSIAGCKEIEYEVMRDSNDNAIVVCNMENIDPVGVHTGDSIVVAPSQTLSDREYQMLRNTSLRIIRALGIEGGCNVQLALDPYSFQYYVIEVNPRVSRSSALASKATGYPIAKLAAKIAVGLTLDEIVNPVTQKTYACFEPALDYVVSKIPRWPFDKFESANRTLGTQMKATGEVMSIGRNLEESLLKAVRSLELGIYHLELDHLKELDKETMKKRIIKADDERLFIVAEAIRQGVTKEEINEWCEMDFFFLQKVENIVNMEREVKANVGNMEVLQTAKEMGFSDHYIAAAWNKTEREIYDMRKENNMTPVFKMVDTCAAEFESATPYYYSTYAEENESIVTDRKSVVVLGSGPIRIGQGVEFDYATVHSVWAIKEAGYEAIIINNNPETVSTDFSISDKLYFEPLTIEDVMHIIDLEKPEGVIVQFGGQTAINLAAKLEEHGVKILGTSLEDLDRAEDRDKFEAALTKLGIPQPVGKTATTVEQAVAIAEEIGYPVLVRPSYVLGGRAMEIVYRQEELLHYMKNAVKVHADHPVLIDRYMVGKEIEVDAISDGENVFIPGIMEHIERAGVHSGDSIGVYPPQSLSEKLKEQIIEHTIALGKGLNIVGLLNIQFVVFENQVYVIEVNPRASRTVPFLSKITGVPMANVATKVILGQDLVEQGYGTGYHPEEKEVYVKAPVFSFAKLRSVDTTLGPEMKSTGEVMGKDLTLEKALYKGLVASGINIPTHGSVIITVADKDKEEAMEIAKRFHEIGYNLLATAGTAQSLTEQNIPVQVVNKIDSEDYNLLDIIRQGKAQFVINTLTKGKQPARDGFRIRRESVENGVACLTSLDTTRAILRVLESMTFSAHSMKEITQTKRHEVVHA.

The interval 1 to 401 is carboxyphosphate synthetic domain; it reads MPKRLDINTI…SLLKAVRSLE (401 aa). Arg-129, Arg-169, Gly-175, Gly-176, Lys-208, Ile-210, Glu-215, Gly-241, Val-242, His-243, Gln-284, and Glu-298 together coordinate ATP. The region spanning 133-327 is the ATP-grasp 1 domain; it reads RTLMQDLNEP…IAKLAAKIAV (195 aa). The Mg(2+) site is built by Gln-284, Glu-298, and Asn-300. Mn(2+)-binding residues include Gln-284, Glu-298, and Asn-300. Residues 402–546 form an oligomerization domain region; the sequence is LGIYHLELDH…YSTYAEENES (145 aa). Residues 547-929 are carbamoyl phosphate synthetic domain; the sequence is IVTDRKSVVV…ALYKGLVASG (383 aa). In terms of domain architecture, ATP-grasp 2 spans 671–861; that stretch reads EAALTKLGIP…MANVATKVIL (191 aa). ATP contacts are provided by Arg-707, Arg-746, Glu-752, Gly-777, Val-778, His-779, Ser-780, Gln-820, and Glu-832. 3 residues coordinate Mg(2+): Gln-820, Glu-832, and Asn-834. Gln-820, Glu-832, and Asn-834 together coordinate Mn(2+). The 143-residue stretch at 930–1072 folds into the MGS-like domain; it reads INIPTHGSVI…QTKRHEVVHA (143 aa). An allosteric domain region spans residues 930-1072; that stretch reads INIPTHGSVI…QTKRHEVVHA (143 aa).

The protein belongs to the CarB family. Composed of two chains; the small (or glutamine) chain promotes the hydrolysis of glutamine to ammonia, which is used by the large (or ammonia) chain to synthesize carbamoyl phosphate. Tetramer of heterodimers (alpha,beta)4. Mg(2+) serves as cofactor. Requires Mn(2+) as cofactor.

It catalyses the reaction hydrogencarbonate + L-glutamine + 2 ATP + H2O = carbamoyl phosphate + L-glutamate + 2 ADP + phosphate + 2 H(+). The catalysed reaction is hydrogencarbonate + NH4(+) + 2 ATP = carbamoyl phosphate + 2 ADP + phosphate + 2 H(+). The protein operates within amino-acid biosynthesis; L-arginine biosynthesis; carbamoyl phosphate from bicarbonate: step 1/1. It participates in pyrimidine metabolism; UMP biosynthesis via de novo pathway; (S)-dihydroorotate from bicarbonate: step 1/3. Large subunit of the glutamine-dependent carbamoyl phosphate synthetase (CPSase). CPSase catalyzes the formation of carbamoyl phosphate from the ammonia moiety of glutamine, carbonate, and phosphate donated by ATP, constituting the first step of 2 biosynthetic pathways, one leading to arginine and/or urea and the other to pyrimidine nucleotides. The large subunit (synthetase) binds the substrates ammonia (free or transferred from glutamine from the small subunit), hydrogencarbonate and ATP and carries out an ATP-coupled ligase reaction, activating hydrogencarbonate by forming carboxy phosphate which reacts with ammonia to form carbamoyl phosphate. The protein is Carbamoyl phosphate synthase large chain of Bacillus cereus (strain ATCC 10987 / NRS 248).